Here is a 273-residue protein sequence, read N- to C-terminus: Formamidopyrimidine-DNA glycosylase (273 aa).

Catalysis depends on Pro2, which acts as the Schiff-base intermediate with DNA. Glu3 (proton donor) is an active-site residue. The Proton donor; for beta-elimination activity role is filled by Lys59. Residues His93, Arg111, and Arg154 each contribute to the DNA site. Residues 239–273 (KVYGRGGEPCKECGHTLVRIRLAGRSTVFCPCCQV) form an FPG-type zinc finger. Arg263 serves as the catalytic Proton donor; for delta-elimination activity.

The protein belongs to the FPG family. As to quaternary structure, monomer. Zn(2+) is required as a cofactor.

It carries out the reaction Hydrolysis of DNA containing ring-opened 7-methylguanine residues, releasing 2,6-diamino-4-hydroxy-5-(N-methyl)formamidopyrimidine.. It catalyses the reaction 2'-deoxyribonucleotide-(2'-deoxyribose 5'-phosphate)-2'-deoxyribonucleotide-DNA = a 3'-end 2'-deoxyribonucleotide-(2,3-dehydro-2,3-deoxyribose 5'-phosphate)-DNA + a 5'-end 5'-phospho-2'-deoxyribonucleoside-DNA + H(+). Its function is as follows. Involved in base excision repair of DNA damaged by oxidation or by mutagenic agents. Acts as a DNA glycosylase that recognizes and removes damaged bases. Has a preference for oxidized purines, such as 7,8-dihydro-8-oxoguanine (8-oxoG). Has AP (apurinic/apyrimidinic) lyase activity and introduces nicks in the DNA strand. Cleaves the DNA backbone by beta-delta elimination to generate a single-strand break at the site of the removed base with both 3'- and 5'-phosphates. This Desulfitobacterium hafniense (strain DSM 10664 / DCB-2) protein is Formamidopyrimidine-DNA glycosylase.